The following is a 204-amino-acid chain: Carbon disulfide hydrolase (204 aa).

Zn(2+) contacts are provided by Cys35, His88, and Cys91.

Belongs to the beta-class carbonic anhydrase family. As to quaternary structure, forms a hexadecameric catenane homooligomer, through interactions of two interlocked octameric rings. Requires Zn(2+) as cofactor.

The enzyme catalyses carbon disulfide + 2 H2O = 2 hydrogen sulfide + CO2 + 2 H(+). It functions in the pathway sulfur metabolism; hydrogen sulfide biosynthesis. In terms of biological role, catalyzes the conversion of carbon disulfide into hydrogen sulfide and carbon dioxide, with carbonyl sulfide as an intermediate. Likely plays a key role in sulfur metabolism in S.solfataricus. Does not show carbonic anhydrase activity (hydration of CO(2) to carbonate). The chain is Carbon disulfide hydrolase from Saccharolobus solfataricus (strain ATCC 35092 / DSM 1617 / JCM 11322 / P2) (Sulfolobus solfataricus).